Here is a 245-residue protein sequence, read N- to C-terminus: Putative [LysW]-aminoadipate/[LysW]-glutamate kinase (245 aa).

Substrate is bound by residues arginine 60 and asparagine 162.

It belongs to the acetylglutamate kinase family. LysZ subfamily.

Its subcellular location is the cytoplasm. The enzyme catalyses [amino-group carrier protein]-C-terminal-N-(1,4-dicarboxybutan-1-yl)-L-glutamine + ATP = [amino-group carrier protein]-C-terminal-N-(1-carboxy-5-phosphooxy-5-oxopentan-1-yl)-L-glutamine + ADP. The catalysed reaction is [amino-group carrier protein]-C-terminal-gamma-(L-glutamyl)-L-glutamate + ATP = [amino-group carrier protein]-C-terminal-gamma-(5-phospho-L-glutamyl)-L-glutamate + ADP. The protein operates within amino-acid biosynthesis; L-lysine biosynthesis via AAA pathway; L-lysine from L-alpha-aminoadipate (Thermus route): step 2/5. It functions in the pathway amino-acid biosynthesis; L-arginine biosynthesis. In terms of biological role, involved in both the arginine and lysine biosynthetic pathways. Phosphorylates the LysW-bound precursors glutamate (for arginine biosynthesis), respectively alpha-aminoadipate (for lysine biosynthesis). The chain is Putative [LysW]-aminoadipate/[LysW]-glutamate kinase from Pyrococcus abyssi (strain GE5 / Orsay).